Here is a 309-residue protein sequence, read N- to C-terminus: Olfactory receptor 1A1 (309 aa).

Topologically, residues 1 to 25 (MRENNQSSTLEFILLGVTGQQEQED) are extracellular. Asn-5 is a glycosylation site (N-linked (GlcNAc...) asparagine). Residues 26–49 (FFYILFLFIYPITLIGNLLIVLAI) form a helical membrane-spanning segment. Over 50–57 (CSDVRLHN) the chain is Cytoplasmic. Residues 58-79 (PMYFLLANLSLVDIFFSSVTIP) form a helical membrane-spanning segment. Residues 80 to 100 (KMLANHLLGSKSISFGGCLTQ) lie on the Extracellular side of the membrane. Cys-97 and Cys-189 form a disulfide bridge. A helical membrane pass occupies residues 101-120 (MYFMIALGNTDSYILAAMAY). The Cytoplasmic segment spans residues 121–139 (DRAVAISRPLHYTTIMSPR). A helical membrane pass occupies residues 140 to 158 (SCIWLIAGSWVIGNANALP). Residues 159-195 (HTLLTASLSFCGNQEVANFYCDITPLLKLSCSDIHFH) are Extracellular-facing. A helical membrane pass occupies residues 196 to 218 (VKMMYLGVGIFSVPLLCIIVSYI). The Cytoplasmic portion of the chain corresponds to 219-235 (RVFSTVFQVPSTKGVLK). A helical transmembrane segment spans residues 236-258 (AFSTCGSHLTVVSLYYGTVMGTY). Residues 259 to 270 (FRPLTNYSLKDA) lie on the Extracellular side of the membrane. N-linked (GlcNAc...) asparagine glycosylation is present at Asn-264. A helical transmembrane segment spans residues 271–290 (VITVMYTAVTPMLNPFIYSL). The Cytoplasmic segment spans residues 291–309 (RNRDMKAALRKLFNKRISS).

The protein belongs to the G-protein coupled receptor 1 family.

Its subcellular location is the cell membrane. Odorant receptor. The protein is Olfactory receptor 1A1 (OR1A1) of Homo sapiens (Human).